Here is a 283-residue protein sequence, read N- to C-terminus: MRIVLTGGSGYIGSSLTPVLIKKYGRVYNIGRNTISEVSINGSKEYCEFTYESLFDSLVELSPDLVINLAAGYYNDSGAPDLNVIDGNLKIPFIILEYFKSCNYGRFINIGSYWEFSCSGRGVKGVNPYGIIKSTVRRLLDYYSKYNVIYTNLILYGSYGDNDHRGKIVDCIIDAVNSNETLKLSPGEQKLNLVYIDDIIEAILYIVSSDNGQYDNETLSIYTPTEHTVKEIVCFINEIKDNNLSLGGGRYRNDEVMAPDYKYRNIFHAKDKLKEYITSKIKK.

NAD(+) is bound by residues 7 to 13 (GGSGYIG), 48 to 49 (EF), tyrosine 129, and lysine 133. Catalysis depends on tyrosine 129, which acts as the Proton acceptor.

It belongs to the NAD(P)-dependent epimerase/dehydratase family.

It carries out the reaction CDP-alpha-D-abequose + NADP(+) = CDP-4-dehydro-3,6-dideoxy-alpha-D-glucose + NADPH + H(+). Its pathway is bacterial outer membrane biogenesis; LPS O-antigen biosynthesis. In terms of biological role, the CDP-abequose synthase is involved in lipopolysaccharides (LPS) synthesis containing abequose which are important antigens of the cell surface responsible for the serological O specificity. Derivatives of the 3,6-dideoxyhexose group have a particular highly immunogenic character. The chain is CDP-abequose synthase (rfbJ) from Yersinia pseudotuberculosis.